Consider the following 884-residue polypeptide: MTSLNDIRSTFLDYFGRQGHAVVPSSPLVPRNDPTLMFVNSGMVQFKNLFTGVEKRDYVRATSSQKCVRAGGKHNDLDNVGYTARHHTFFEMLGNFSFGDYFKEDAIRYAWELITKDFGLDKARLYVTVYHTDDEAFEIWKKVGVPEDRIIRIATSDNFWQMGPTGPCGPCTEIFYDHGEHIWGGPPGSAEEDGDRFIEIWNIVFMQNEQFADGTMVPLDMQSIDTGMGLERIGALLQGSHDNYDTDTMRALMEASAHASSTDLDGDQNVHHRVIADHLRSTSFLIADGVMPSNDGRGYVLRRIMRRAMRHAHLLGAKDPLMYRLVPALVSQMGQAYSELGQAQALITETLKLEEERFRQTLDRGLKLLDDEVAKLPEDGNLPGAAAFKLYDTYGFPLDLTQDALREQGRTVDTDGFDAAMAEQKAKARAAWSGSGDAADATIWFDIAEKNGVTEFLGYDTEVAEGQVLALVVDGARVDKVASNQDVIFVTNQTPFYAESGGQVGDSGTIRTETGVLHVTETRKVAGVFLHVGQVTEGTIKVGQGASLSVDHERRRYICANHSATHLLNEALRWAIGDSVVQRGSLNSRDRLRFDFSHNKPMTADELAQVEAEVNDLITRNTAVETRVMTPDDARALGAQALFGEKYGDEVRVVSMGHHAGSGKGLDKDTYSIELCGGTHVKRTGDIGPFVILSESASAAGVRRIEALTNQTASFYLSEQNERMGQLAAELNTQAADVLDRVKALKDDRKKLENEVAQLRRELAMAGGTSAPEAASVNGVNFHAQALSGVTGKDLAGIVDEHKARLGSGAVLLIADAGGKAAVAAGVTEDLTDRLSAVDLVRAAVAELGGKGGGGRPDFAQGGGKDAANAEAAIAAAKTVIEGV.

Zn(2+)-binding residues include H562, H566, C676, and H680.

The protein belongs to the class-II aminoacyl-tRNA synthetase family. It depends on Zn(2+) as a cofactor.

It localises to the cytoplasm. The enzyme catalyses tRNA(Ala) + L-alanine + ATP = L-alanyl-tRNA(Ala) + AMP + diphosphate. Its function is as follows. Catalyzes the attachment of alanine to tRNA(Ala) in a two-step reaction: alanine is first activated by ATP to form Ala-AMP and then transferred to the acceptor end of tRNA(Ala). Also edits incorrectly charged Ser-tRNA(Ala) and Gly-tRNA(Ala) via its editing domain. The polypeptide is Alanine--tRNA ligase (Jannaschia sp. (strain CCS1)).